We begin with the raw amino-acid sequence, 878 residues long: Alanine--tRNA ligase (878 aa).

Zn(2+) contacts are provided by His-564, His-568, Cys-665, and His-669.

Belongs to the class-II aminoacyl-tRNA synthetase family. The cofactor is Zn(2+).

The protein localises to the cytoplasm. It carries out the reaction tRNA(Ala) + L-alanine + ATP = L-alanyl-tRNA(Ala) + AMP + diphosphate. Catalyzes the attachment of alanine to tRNA(Ala) in a two-step reaction: alanine is first activated by ATP to form Ala-AMP and then transferred to the acceptor end of tRNA(Ala). Also edits incorrectly charged Ser-tRNA(Ala) and Gly-tRNA(Ala) via its editing domain. This is Alanine--tRNA ligase from Natranaerobius thermophilus (strain ATCC BAA-1301 / DSM 18059 / JW/NM-WN-LF).